The primary structure comprises 224 residues: Peroxiredoxin-6 (224 aa).

Positions 4–168 constitute a Thioredoxin domain; the sequence is LLLGDEAPNF…ILRVVDSLQL (165 aa). Positions 30-39 are required and sufficient for targeting to lysosomes and lamellar bodies; that stretch reads DSWGILFSHP. Cysteine 46 acts as the Cysteine sulfenic acid (-SOH) intermediate; for peroxidase activity in catalysis. Position 88 is a phosphotyrosine (tyrosine 88). Residue aspartate 139 is the For phospholipase activity of the active site. Threonine 176 carries the phosphothreonine; by MAPK modification.

The protein belongs to the peroxiredoxin family. Prx6 subfamily. In terms of assembly, homodimer. Interacts with GSTP1; mediates PRDX6 glutathionylation and regeneration. Irreversibly inactivated by overoxidation of Cys-46 to sulfinic acid (Cys-SO(2)H) and sulfonic acid (Cys-SO(3)H) forms upon oxidative stress. In terms of processing, phosphorylation at Thr-176 by MAP kinases increases the phospholipase activity of the enzyme. The phosphorylated form exhibits a greater lysophosphatidylcholine acyltransferase activity compared to the non-phosphorylated form.

It localises to the cytoplasm. It is found in the lysosome. The enzyme catalyses a hydroperoxide + 2 glutathione = an alcohol + glutathione disulfide + H2O. It catalyses the reaction a 1,2-diacyl-sn-glycero-3-phosphocholine + H2O = a 1-acyl-sn-glycero-3-phosphocholine + a fatty acid + H(+). The catalysed reaction is a 1-acyl-sn-glycero-3-phosphocholine + an acyl-CoA = a 1,2-diacyl-sn-glycero-3-phosphocholine + CoA. It carries out the reaction 1-hexadecanoyl-sn-glycero-3-phosphocholine + hexadecanoyl-CoA = 1,2-dihexadecanoyl-sn-glycero-3-phosphocholine + CoA. The enzyme catalyses 1,2-dihexadecanoyl-sn-glycero-3-phosphocholine + H2O = 1-hexadecanoyl-sn-glycero-3-phosphocholine + hexadecanoate + H(+). In terms of biological role, thiol-specific peroxidase that catalyzes the reduction of hydrogen peroxide and organic hydroperoxides to water and alcohols, respectively. Can reduce H(2)O(2) and short chain organic, fatty acid, and phospholipid hydroperoxides. Also has phospholipase activity, and can therefore either reduce the oxidized sn-2 fatty acyl group of phospholipids (peroxidase activity) or hydrolyze the sn-2 ester bond of phospholipids (phospholipase activity). These activities are dependent on binding to phospholipids at acidic pH and to oxidized phospholipds at cytosolic pH. Plays a role in cell protection against oxidative stress by detoxifying peroxides and in phospholipid homeostasis. Exhibits acyl-CoA-dependent lysophospholipid acyltransferase which mediates the conversion of lysophosphatidylcholine (1-acyl-sn-glycero-3-phosphocholine or LPC) into phosphatidylcholine (1,2-diacyl-sn-glycero-3-phosphocholine or PC). Shows a clear preference for LPC as the lysophospholipid and for palmitoyl CoA as the fatty acyl substrate. The sequence is that of Peroxiredoxin-6 (PRDX6) from Gallus gallus (Chicken).